Reading from the N-terminus, the 328-residue chain is GATA transcription factor 17 (328 aa).

Residues 1–68 (MSGHHEAKPY…EEYEGGEGVP (68 aa)) are disordered. Low complexity predominate over residues 14-29 (RGPAPADEEAAPAAAA). 2 stretches are compositionally biased toward acidic residues: residues 30–39 (DEAEAEAEVE) and 47–63 (EQEY…EYEG). In terms of domain architecture, Tify spans 100 to 135 (PHVASNTLTLSFQGEVYVFESVSAERVQAVLLLLGG). The CCT domain occupies 161 to 203 (RMASLMRFREKRKERNFDKKIRYTVRKEVALRMQRNRGQFTSS). Positions 198–231 (GQFTSSKSKAEEATSVITSSEGSPNWGAVEGRPP) are disordered. The segment at 236-263 (CHHCGISAASTPMMRRGPDGPRTLCNAC) adopts a GATA-type zinc-finger fold.

This sequence belongs to the type IV zinc-finger family. Class C subfamily.

It is found in the nucleus. Transcriptional activator that specifically binds 5'-GATA-3' or 5'-GAT-3' motifs within gene promoters. The protein is GATA transcription factor 17 of Oryza sativa subsp. japonica (Rice).